The chain runs to 323 residues: Acetyl-coenzyme A carboxylase carboxyl transferase subunit alpha (323 aa).

Residues 40-293 enclose the CoA carboxyltransferase C-terminal domain; the sequence is LAEKSLQLTK…RKALAESLKT (254 aa).

This sequence belongs to the AccA family. In terms of assembly, acetyl-CoA carboxylase is a heterohexamer composed of biotin carboxyl carrier protein (AccB), biotin carboxylase (AccC) and two subunits each of ACCase subunit alpha (AccA) and ACCase subunit beta (AccD).

It is found in the cytoplasm. The catalysed reaction is N(6)-carboxybiotinyl-L-lysyl-[protein] + acetyl-CoA = N(6)-biotinyl-L-lysyl-[protein] + malonyl-CoA. It participates in lipid metabolism; malonyl-CoA biosynthesis; malonyl-CoA from acetyl-CoA: step 1/1. In terms of biological role, component of the acetyl coenzyme A carboxylase (ACC) complex. First, biotin carboxylase catalyzes the carboxylation of biotin on its carrier protein (BCCP) and then the CO(2) group is transferred by the carboxyltransferase to acetyl-CoA to form malonyl-CoA. This Polynucleobacter necessarius subsp. necessarius (strain STIR1) protein is Acetyl-coenzyme A carboxylase carboxyl transferase subunit alpha.